Reading from the N-terminus, the 181-residue chain is Acireductone dioxygenase (181 aa).

Acidic residues predominate over residues 1–10; sequence MRAYIYDEES. Positions 1 to 23 are disordered; sequence MRAYIYDEESQLSPQDEHESSQS. Residues His-82, His-84, Glu-88, and His-128 each contribute to the Fe(2+) site. Ni(2+) is bound by residues His-82, His-84, Glu-88, and His-128.

This sequence belongs to the acireductone dioxygenase (ARD) family. Requires Fe(2+) as cofactor. It depends on Ni(2+) as a cofactor.

It is found in the cytoplasm. Its subcellular location is the nucleus. It catalyses the reaction 1,2-dihydroxy-5-(methylsulfanyl)pent-1-en-3-one + O2 = 4-methylsulfanyl-2-oxobutanoate + formate + 2 H(+). The catalysed reaction is 1,2-dihydroxy-5-(methylsulfanyl)pent-1-en-3-one + O2 = 3-(methylsulfanyl)propanoate + CO + formate + 2 H(+). It functions in the pathway amino-acid biosynthesis; L-methionine biosynthesis via salvage pathway; L-methionine from S-methyl-5-thio-alpha-D-ribose 1-phosphate: step 5/6. In terms of biological role, catalyzes 2 different reactions between oxygen and the acireductone 1,2-dihydroxy-3-keto-5-methylthiopentene (DHK-MTPene) depending upon the metal bound in the active site. Fe-containing acireductone dioxygenase (Fe-ARD) produces formate and 2-keto-4-methylthiobutyrate (KMTB), the alpha-ketoacid precursor of methionine in the methionine recycle pathway. Ni-containing acireductone dioxygenase (Ni-ARD) produces methylthiopropionate, carbon monoxide and formate, and does not lie on the methionine recycle pathway. In Puccinia graminis f. sp. tritici (strain CRL 75-36-700-3 / race SCCL) (Black stem rust fungus), this protein is Acireductone dioxygenase.